The following is a 932-amino-acid chain: Glycine dehydrogenase (decarboxylating) (932 aa).

N6-(pyridoxal phosphate)lysine is present on Lys-685.

Belongs to the GcvP family. As to quaternary structure, the glycine cleavage system is composed of four proteins: P, T, L and H. Pyridoxal 5'-phosphate serves as cofactor.

The catalysed reaction is N(6)-[(R)-lipoyl]-L-lysyl-[glycine-cleavage complex H protein] + glycine + H(+) = N(6)-[(R)-S(8)-aminomethyldihydrolipoyl]-L-lysyl-[glycine-cleavage complex H protein] + CO2. The glycine cleavage system catalyzes the degradation of glycine. The P protein binds the alpha-amino group of glycine through its pyridoxal phosphate cofactor; CO(2) is released and the remaining methylamine moiety is then transferred to the lipoamide cofactor of the H protein. This chain is Glycine dehydrogenase (decarboxylating), found in Brucella melitensis biotype 2 (strain ATCC 23457).